The following is a 316-amino-acid chain: uncharacterized protein (316 aa).

It to yeast YGR277c.

This is an uncharacterized protein from Schizosaccharomyces pombe (strain 972 / ATCC 24843) (Fission yeast).